The following is a 396-amino-acid chain: Elongation factor Tu 2 (396 aa).

Residues 10–206 (KPHCNIGTIG…TVDAYIPQPD (197 aa)) enclose the tr-type G domain. Positions 19-26 (GHVDHGKT) are G1. 19–26 (GHVDHGKT) contacts GTP. A Mg(2+)-binding site is contributed by T26. The tract at residues 60–64 (GITIN) is G2. The tract at residues 81-84 (DCPG) is G3. GTP-binding positions include 81–85 (DCPGH) and 136–139 (NKVD). The tract at residues 136 to 139 (NKVD) is G4. The G5 stretch occupies residues 174–176 (SAK).

It belongs to the TRAFAC class translation factor GTPase superfamily. Classic translation factor GTPase family. EF-Tu/EF-1A subfamily. As to quaternary structure, monomer.

Its subcellular location is the cytoplasm. It catalyses the reaction GTP + H2O = GDP + phosphate + H(+). In terms of biological role, GTP hydrolase that promotes the GTP-dependent binding of aminoacyl-tRNA to the A-site of ribosomes during protein biosynthesis. The chain is Elongation factor Tu 2 from Caulobacter sp. (strain K31).